Here is a 235-residue protein sequence, read N- to C-terminus: tRNA (guanine-N(1)-)-methyltransferase (235 aa).

Residues glycine 112 and 132–137 (IGDYVL) each bind S-adenosyl-L-methionine.

It belongs to the RNA methyltransferase TrmD family. As to quaternary structure, homodimer.

The protein localises to the cytoplasm. The catalysed reaction is guanosine(37) in tRNA + S-adenosyl-L-methionine = N(1)-methylguanosine(37) in tRNA + S-adenosyl-L-homocysteine + H(+). Specifically methylates guanosine-37 in various tRNAs. The polypeptide is tRNA (guanine-N(1)-)-methyltransferase (Cytophaga hutchinsonii (strain ATCC 33406 / DSM 1761 / CIP 103989 / NBRC 15051 / NCIMB 9469 / D465)).